Here is a 271-residue protein sequence, read N- to C-terminus: tRNA pseudouridine synthase A (271 aa).

Asp54 serves as the catalytic Nucleophile. Tyr112 contributes to the substrate binding site.

This sequence belongs to the tRNA pseudouridine synthase TruA family. Homodimer.

It catalyses the reaction uridine(38/39/40) in tRNA = pseudouridine(38/39/40) in tRNA. In terms of biological role, formation of pseudouridine at positions 38, 39 and 40 in the anticodon stem and loop of transfer RNAs. This Acinetobacter baylyi (strain ATCC 33305 / BD413 / ADP1) protein is tRNA pseudouridine synthase A.